The primary structure comprises 493 residues: Alpha-amylase-related protein (493 aa).

The first 19 residues, 1-19, serve as a signal peptide directing secretion; the sequence is MFKFALTLTLCLAGSLSLA. Glutamine 20 bears the Pyrrolidone carboxylic acid mark. Cysteine 47 and cysteine 103 are disulfide-bonded. Ca(2+) contacts are provided by asparagine 117, glutamine 168, and aspartate 177. Residues cysteine 156 and cysteine 170 are joined by a disulfide bond. Arginine 205 serves as a coordination point for chloride. The Nucleophile role is filled by aspartate 207. Histidine 211 serves as a coordination point for Ca(2+). Glutamate 244 serves as the catalytic Proton donor. Residues asparagine 307 and arginine 342 each contribute to the chloride site. 3 disulfides stabilise this stretch: cysteine 375-cysteine 381, cysteine 417-cysteine 440, and cysteine 447-cysteine 459.

Belongs to the glycosyl hydrolase 13 family. Monomer. Requires Ca(2+) as cofactor. Chloride serves as cofactor.

The protein resides in the secreted. The catalysed reaction is Endohydrolysis of (1-&gt;4)-alpha-D-glucosidic linkages in polysaccharides containing three or more (1-&gt;4)-alpha-linked D-glucose units.. This is Alpha-amylase-related protein (Amyrel) from Drosophila sechellia (Fruit fly).